Here is a 222-residue protein sequence, read N- to C-terminus: UPF0502 protein Shewmr7_1629 (222 aa).

It belongs to the UPF0502 family.

This chain is UPF0502 protein Shewmr7_1629, found in Shewanella sp. (strain MR-7).